A 386-amino-acid polypeptide reads, in one-letter code: Succinate--CoA ligase [ADP-forming] subunit beta (386 aa).

One can recognise an ATP-grasp domain in the interval 9–244 (KEILRKYGVP…HDEEDPLETR (236 aa)). Residues Lys46, 53–55 (GRG), Glu99, Cys102, and Glu107 each bind ATP. Asn199 and Asp213 together coordinate Mg(2+). Substrate contacts are provided by residues Asn264 and 321-323 (GIM).

The protein belongs to the succinate/malate CoA ligase beta subunit family. In terms of assembly, heterotetramer of two alpha and two beta subunits. The cofactor is Mg(2+).

The catalysed reaction is succinate + ATP + CoA = succinyl-CoA + ADP + phosphate. It carries out the reaction GTP + succinate + CoA = succinyl-CoA + GDP + phosphate. The protein operates within carbohydrate metabolism; tricarboxylic acid cycle; succinate from succinyl-CoA (ligase route): step 1/1. Its function is as follows. Succinyl-CoA synthetase functions in the citric acid cycle (TCA), coupling the hydrolysis of succinyl-CoA to the synthesis of either ATP or GTP and thus represents the only step of substrate-level phosphorylation in the TCA. The beta subunit provides nucleotide specificity of the enzyme and binds the substrate succinate, while the binding sites for coenzyme A and phosphate are found in the alpha subunit. The protein is Succinate--CoA ligase [ADP-forming] subunit beta of Rickettsia rickettsii (strain Iowa).